Consider the following 261-residue polypeptide: 2-phytyl-1,4-beta-naphthoquinone methyltransferase, chloroplastic (261 aa).

The N-terminal 30 residues, 1 to 30 (MAALLGIVSPVTFTGKHPVNSRSRRRTVVK), are a transit peptide targeting the chloroplast.

Belongs to the class I-like SAM-binding methyltransferase superfamily. MenG/UbiE family.

The protein resides in the plastid. The protein localises to the chloroplast. The enzyme catalyses demethylphylloquinol + S-adenosyl-L-methionine = phylloquinol + S-adenosyl-L-homocysteine + H(+). In terms of biological role, involved in the biosynthesis of phylloquinone (vitamin K1). Methyltransferase required for the conversion of 2-phytyl-1,4-beta-naphthoquinol to phylloquinol. This is 2-phytyl-1,4-beta-naphthoquinone methyltransferase, chloroplastic from Arabidopsis thaliana (Mouse-ear cress).